The sequence spans 637 residues: Sphingomyelin phosphodiesterase B (637 aa).

Residues 1–20 (MKVKAPILLLFVFLINFCFS) form the signal peptide. A glycan (N-linked (GlcNAc...) asparagine) is linked at Asn-73. The region spanning 73-155 (NGTKCDICKF…GFVGFCPYVP (83 aa)) is the Saposin B-type domain. Cystine bridges form between Cys-77-Cys-151, Cys-80-Cys-145, and Cys-108-Cys-119. N-linked (GlcNAc...) asparagine glycans are attached at residues Asn-128 and Asn-157. The Zn(2+) site is built by Asp-191 and His-193. Cys-212 and Cys-233 are disulfide-bonded. Asp-263 is a binding site for Zn(2+). N-linked (GlcNAc...) asparagine glycosylation occurs at Asn-279. Residue Asn-304 coordinates Zn(2+). Residue Asn-377 is glycosylated (N-linked (GlcNAc...) asparagine). Zn(2+) is bound by residues His-407, His-441, and His-443. Asn-523 and Asn-546 each carry an N-linked (GlcNAc...) asparagine glycan. The cysteines at positions 582 and 595 are disulfide-linked. N-linked (GlcNAc...) asparagine glycosylation is present at Asn-606.

Belongs to the acid sphingomyelinase family. The cofactor is Zn(2+).

Its subcellular location is the secreted. In terms of biological role, converts sphingomyelin to ceramide. The sequence is that of Sphingomyelin phosphodiesterase B (sgmB) from Dictyostelium discoideum (Social amoeba).